Reading from the N-terminus, the 614-residue chain is ATP-dependent zinc metalloprotease FtsH (614 aa).

Topologically, residues 1-5 are cytoplasmic; it reads MLPIR. Residues 6–26 form a helical membrane-spanning segment; that stretch reads WFLALLAVFLAVAGLDLWFSQ. Topologically, residues 27–127 are periplasmic; sequence TGARPSSATG…AVSARERTAS (101 aa). Residues 128–148 form a helical membrane-spanning segment; it reads IVHAIVHPLGLITLIVGILFV. Residues 149–614 are Cytoplasmic-facing; the sequence is VQRYAGRFTA…AQHPPSALAG (466 aa). 214–221 is an ATP binding site; that stretch reads GPPGTGKT. His-436 contacts Zn(2+). Glu-437 is an active-site residue. Zn(2+)-binding residues include His-440 and Asp-513.

It in the central section; belongs to the AAA ATPase family. This sequence in the C-terminal section; belongs to the peptidase M41 family. As to quaternary structure, homohexamer. Zn(2+) is required as a cofactor.

The protein resides in the cell inner membrane. Its function is as follows. Acts as a processive, ATP-dependent zinc metallopeptidase for both cytoplasmic and membrane proteins. Plays a role in the quality control of integral membrane proteins. This Opitutus terrae (strain DSM 11246 / JCM 15787 / PB90-1) protein is ATP-dependent zinc metalloprotease FtsH.